The sequence spans 75 residues: UPF0352 protein VSAL_I1058 (75 aa).

The protein belongs to the UPF0352 family.

In Aliivibrio salmonicida (strain LFI1238) (Vibrio salmonicida (strain LFI1238)), this protein is UPF0352 protein VSAL_I1058.